The chain runs to 334 residues: Large ribosomal subunit protein uL3 (334 aa).

Over residues 1–10 (MGMKKNRPRR) the composition is skewed to basic residues. Positions 1–21 (MGMKKNRPRRGSLAFSPRKRA) are disordered.

The protein belongs to the universal ribosomal protein uL3 family. As to quaternary structure, part of the 50S ribosomal subunit. Forms a cluster with proteins L14 and L24e.

Its function is as follows. One of the primary rRNA binding proteins, it binds directly near the 3'-end of the 23S rRNA, where it nucleates assembly of the 50S subunit. The polypeptide is Large ribosomal subunit protein uL3 (Methanococcus vannielii (strain ATCC 35089 / DSM 1224 / JCM 13029 / OCM 148 / SB)).